The primary structure comprises 509 residues: tRNA (guanine(37)-N(1))-methyltransferase (509 aa).

The N-terminal 57 residues, 1-57 (MVLWILWRPFGFSRRLLKLERHSITESKSLIPLAWTSLTQTLSESPGIFLLGQRKRF), are a transit peptide targeting the mitochondrion. Residues H289, 327 to 328 (DL), 355 to 356 (DG), and N387 contribute to the S-adenosyl-L-methionine site. Residues 478–509 (TKNPENHEDPPLKRQRTAEAFSDEKTQIASNT) are disordered.

It belongs to the class I-like SAM-binding methyltransferase superfamily. TRM5/TYW2 family. In terms of assembly, monomer.

The protein localises to the mitochondrion matrix. The protein resides in the nucleus. Its subcellular location is the cytoplasm. The enzyme catalyses guanosine(37) in tRNA + S-adenosyl-L-methionine = N(1)-methylguanosine(37) in tRNA + S-adenosyl-L-homocysteine + H(+). In terms of biological role, involved in mitochondrial tRNA methylation. Specifically methylates the N1 position of guanosine-37 in various tRNAs. Methylation is not dependent on the nature of the nucleoside 5' of the target nucleoside. This is the first step in the biosynthesis of wybutosine (yW), a modified base adjacent to the anticodon of tRNAs and required for accurate decoding. The protein is tRNA (guanine(37)-N(1))-methyltransferase of Macaca mulatta (Rhesus macaque).